A 445-amino-acid chain; its full sequence is UPF0210 protein SPJ_0248 (445 aa).

It belongs to the UPF0210 family. As to quaternary structure, homodimer.

The polypeptide is UPF0210 protein SPJ_0248 (Streptococcus pneumoniae (strain JJA)).